A 290-amino-acid chain; its full sequence is 4-hydroxy-tetrahydrodipicolinate synthase (290 aa).

T48 is a pyruvate binding site. Catalysis depends on Y137, which acts as the Proton donor/acceptor. The Schiff-base intermediate with substrate role is filled by K165. I206 contacts pyruvate.

This sequence belongs to the DapA family. Homotetramer; dimer of dimers.

It localises to the cytoplasm. The enzyme catalyses L-aspartate 4-semialdehyde + pyruvate = (2S,4S)-4-hydroxy-2,3,4,5-tetrahydrodipicolinate + H2O + H(+). Its pathway is amino-acid biosynthesis; L-lysine biosynthesis via DAP pathway; (S)-tetrahydrodipicolinate from L-aspartate: step 3/4. Catalyzes the condensation of (S)-aspartate-beta-semialdehyde [(S)-ASA] and pyruvate to 4-hydroxy-tetrahydrodipicolinate (HTPA). This is 4-hydroxy-tetrahydrodipicolinate synthase from Enterococcus faecalis (strain ATCC 700802 / V583).